We begin with the raw amino-acid sequence, 182 residues long: Isopentenyl-diphosphate Delta-isomerase (182 aa).

Mn(2+) contacts are provided by His-25 and His-32. The 135-residue stretch at 30–164 (LLHLAFSSWL…PWAFSPWMVM (135 aa)) folds into the Nudix hydrolase domain. Cys-67 is a catalytic residue. His-69 contributes to the Mn(2+) binding site. Glu-87 provides a ligand contact to Mg(2+). Mn(2+) is bound by residues Glu-114 and Glu-116. Glu-116 is an active-site residue.

The protein belongs to the IPP isomerase type 1 family. As to quaternary structure, homodimer. It depends on Mg(2+) as a cofactor. Requires Mn(2+) as cofactor.

It localises to the cytoplasm. The enzyme catalyses isopentenyl diphosphate = dimethylallyl diphosphate. The protein operates within isoprenoid biosynthesis; dimethylallyl diphosphate biosynthesis; dimethylallyl diphosphate from isopentenyl diphosphate: step 1/1. In terms of biological role, catalyzes the 1,3-allylic rearrangement of the homoallylic substrate isopentenyl (IPP) to its highly electrophilic allylic isomer, dimethylallyl diphosphate (DMAPP). The protein is Isopentenyl-diphosphate Delta-isomerase of Shigella boydii serotype 18 (strain CDC 3083-94 / BS512).